A 627-amino-acid chain; its full sequence is Phosphomethylpyrimidine synthase (627 aa).

A compositionally biased stretch (polar residues) spans 1-24; sequence MSATQKNNITRLEQLDRQSTQPFP. Positions 1–29 are disordered; sequence MSATQKNNITRLEQLDRQSTQPFPNSRKV. Residues N231, M260, Y289, H325, 345 to 347, 386 to 389, and E425 contribute to the substrate site; these read SRG and DGLR. A Zn(2+)-binding site is contributed by H429. Y452 serves as a coordination point for substrate. A Zn(2+)-binding site is contributed by H493. [4Fe-4S] cluster-binding residues include C573, C576, and C581.

Belongs to the ThiC family. As to quaternary structure, homodimer. It depends on [4Fe-4S] cluster as a cofactor.

The enzyme catalyses 5-amino-1-(5-phospho-beta-D-ribosyl)imidazole + S-adenosyl-L-methionine = 4-amino-2-methyl-5-(phosphooxymethyl)pyrimidine + CO + 5'-deoxyadenosine + formate + L-methionine + 3 H(+). It functions in the pathway cofactor biosynthesis; thiamine diphosphate biosynthesis. Catalyzes the synthesis of the hydroxymethylpyrimidine phosphate (HMP-P) moiety of thiamine from aminoimidazole ribotide (AIR) in a radical S-adenosyl-L-methionine (SAM)-dependent reaction. In Pseudomonas paraeruginosa (strain DSM 24068 / PA7) (Pseudomonas aeruginosa (strain PA7)), this protein is Phosphomethylpyrimidine synthase.